A 259-amino-acid chain; its full sequence is Deoxyribose-phosphate aldolase (259 aa).

The active-site Proton donor/acceptor is the D102. The active-site Schiff-base intermediate with acetaldehyde is the K167. The active-site Proton donor/acceptor is the K201.

This sequence belongs to the DeoC/FbaB aldolase family. DeoC type 2 subfamily.

The protein resides in the cytoplasm. It carries out the reaction 2-deoxy-D-ribose 5-phosphate = D-glyceraldehyde 3-phosphate + acetaldehyde. Its pathway is carbohydrate degradation; 2-deoxy-D-ribose 1-phosphate degradation; D-glyceraldehyde 3-phosphate and acetaldehyde from 2-deoxy-alpha-D-ribose 1-phosphate: step 2/2. Its function is as follows. Catalyzes a reversible aldol reaction between acetaldehyde and D-glyceraldehyde 3-phosphate to generate 2-deoxy-D-ribose 5-phosphate. The sequence is that of Deoxyribose-phosphate aldolase from Klebsiella pneumoniae (strain 342).